The primary structure comprises 115 residues: NADH-ubiquinone oxidoreductase chain 3 (115 aa).

The next 3 helical transmembrane spans lie at 3 to 23 (LMLT…IAFW), 55 to 75 (FFLV…LLPL), and 84 to 104 (LNTM…SLAY).

The protein belongs to the complex I subunit 3 family. As to quaternary structure, core subunit of respiratory chain NADH dehydrogenase (Complex I) which is composed of 45 different subunits. Interacts with TMEM186. Interacts with TMEM242.

The protein resides in the mitochondrion inner membrane. The catalysed reaction is a ubiquinone + NADH + 5 H(+)(in) = a ubiquinol + NAD(+) + 4 H(+)(out). Functionally, core subunit of the mitochondrial membrane respiratory chain NADH dehydrogenase (Complex I) which catalyzes electron transfer from NADH through the respiratory chain, using ubiquinone as an electron acceptor. Essential for the catalytic activity of complex I. The sequence is that of NADH-ubiquinone oxidoreductase chain 3 from Equus asinus (Donkey).